Here is a 400-residue protein sequence, read N- to C-terminus: Cytohesin-3 (400 aa).

Residues E14–S61 are a coiled coil. Residues F77–N206 enclose the SEC7 domain. One can recognise a PH domain in the interval N264 to S381. Residues K273–T281, R285, Y296, R306, and N355 contribute to the a 1,2-diacyl-sn-glycero-3-phospho-(1D-myo-inositol-3,4,5-trisphosphate) site. The segment at R392–K400 is C-terminal autoinhibitory region.

Interacts with TAMALIN. Interacts with ARF6. Interacts with FRMD4A. Interacts with FRMD4B. As to expression, almost absent from liver, thymus and peripheral blood lymphocytes.

The protein resides in the cytoplasm. It is found in the cytosol. Its subcellular location is the cell membrane. It localises to the cell junction. The protein localises to the adherens junction. The protein resides in the tight junction. Promotes guanine-nucleotide exchange on ARF1 and ARF6. Promotes the activation of ARF factors through replacement of GDP with GTP. Plays a role in the epithelial polarization. The protein is Cytohesin-3 of Homo sapiens (Human).